The primary structure comprises 356 residues: DNA polymerase IV (356 aa).

The UmuC domain maps to 7-187 (IIHVDMDAFY…LPVNRVPGVG (181 aa)). Mg(2+) is bound by residues aspartate 11 and aspartate 105. Glutamate 106 is a catalytic residue.

It belongs to the DNA polymerase type-Y family. As to quaternary structure, monomer. Mg(2+) is required as a cofactor.

The protein resides in the cytoplasm. The enzyme catalyses DNA(n) + a 2'-deoxyribonucleoside 5'-triphosphate = DNA(n+1) + diphosphate. In terms of biological role, poorly processive, error-prone DNA polymerase involved in untargeted mutagenesis. Copies undamaged DNA at stalled replication forks, which arise in vivo from mismatched or misaligned primer ends. These misaligned primers can be extended by PolIV. Exhibits no 3'-5' exonuclease (proofreading) activity. May be involved in translesional synthesis, in conjunction with the beta clamp from PolIII. The chain is DNA polymerase IV from Stenotrophomonas maltophilia (strain R551-3).